The primary structure comprises 165 residues: MDIAHDLQSIGAQEQALVFPHFDPARAWALGNRMHALATSRGHAIAIDIVTFGQPLFYAALAGATPDNADWVRRKRNVVAHFRRSSYAIGLRMQQAGATLADKHGLPIAEYSPHGGSFPLTVAGAGVIGSITASGLPQRADHEFVVEALCAELGHDYAVLALARS.

This sequence belongs to the UPF0303 family.

The sequence is that of UPF0303 protein Bcep18194_A4700 from Burkholderia lata (strain ATCC 17760 / DSM 23089 / LMG 22485 / NCIMB 9086 / R18194 / 383).